The chain runs to 161 residues: MPSFDTVCEADFVEVKNAVENTAKEIGTRFDFKGTSAAIELKDKEITLFGDADFQLQQVEDILRNKLTKRSVDVRFLDIQKAQKIGGDKLKQTIKVKNGIEAELGKKLQKLIKDSKLKVQAAIQGDAVRVTGAKRDDLQAAMALIRKDLADHPLSFNNFRD.

It belongs to the YajQ family.

In terms of biological role, nucleotide-binding protein. The sequence is that of Nucleotide-binding protein Daci_4781 from Delftia acidovorans (strain DSM 14801 / SPH-1).